Here is a 58-residue protein sequence, read N- to C-terminus: UPF0391 membrane protein Sbal195_1447 (58 aa).

Helical transmembrane passes span 6-26 and 28-48; these read LVFLVVAVIAGLLGFTGIAGA and AGIAKIIFFVFIVLLVISLLV.

It belongs to the UPF0391 family.

Its subcellular location is the cell membrane. The chain is UPF0391 membrane protein Sbal195_1447 from Shewanella baltica (strain OS195).